Reading from the N-terminus, the 230-residue chain is Large ribosomal subunit protein uL1 (230 aa).

The protein belongs to the universal ribosomal protein uL1 family. As to quaternary structure, part of the 50S ribosomal subunit.

Its function is as follows. Binds directly to 23S rRNA. The L1 stalk is quite mobile in the ribosome, and is involved in E site tRNA release. In terms of biological role, protein L1 is also a translational repressor protein, it controls the translation of the L11 operon by binding to its mRNA. This is Large ribosomal subunit protein uL1 from Onion yellows phytoplasma (strain OY-M).